A 414-amino-acid polypeptide reads, in one-letter code: Serine hydroxymethyltransferase (414 aa).

(6S)-5,6,7,8-tetrahydrofolate-binding positions include L117 and 121–123; that span reads GHL. K226 carries the N6-(pyridoxal phosphate)lysine modification. Residue 349–351 coordinates (6S)-5,6,7,8-tetrahydrofolate; sequence SPF.

The protein belongs to the SHMT family. As to quaternary structure, homodimer. Pyridoxal 5'-phosphate serves as cofactor.

It localises to the cytoplasm. The enzyme catalyses (6R)-5,10-methylene-5,6,7,8-tetrahydrofolate + glycine + H2O = (6S)-5,6,7,8-tetrahydrofolate + L-serine. It participates in one-carbon metabolism; tetrahydrofolate interconversion. It functions in the pathway amino-acid biosynthesis; glycine biosynthesis; glycine from L-serine: step 1/1. Catalyzes the reversible interconversion of serine and glycine with tetrahydrofolate (THF) serving as the one-carbon carrier. This reaction serves as the major source of one-carbon groups required for the biosynthesis of purines, thymidylate, methionine, and other important biomolecules. Also exhibits THF-independent aldolase activity toward beta-hydroxyamino acids, producing glycine and aldehydes, via a retro-aldol mechanism. The protein is Serine hydroxymethyltransferase of Desulfovibrio desulfuricans (strain ATCC 27774 / DSM 6949 / MB).